The sequence spans 323 residues: Glyoxylate/hydroxypyruvate reductase B (323 aa).

Catalysis depends on residues Arg-237 and Glu-266. The active-site Proton donor is His-285.

This sequence belongs to the D-isomer specific 2-hydroxyacid dehydrogenase family. GhrB subfamily. In terms of assembly, homodimer.

Its subcellular location is the cytoplasm. The enzyme catalyses glycolate + NADP(+) = glyoxylate + NADPH + H(+). The catalysed reaction is (R)-glycerate + NAD(+) = 3-hydroxypyruvate + NADH + H(+). It carries out the reaction (R)-glycerate + NADP(+) = 3-hydroxypyruvate + NADPH + H(+). Its function is as follows. Catalyzes the NADPH-dependent reduction of glyoxylate and hydroxypyruvate into glycolate and glycerate, respectively. The chain is Glyoxylate/hydroxypyruvate reductase B from Klebsiella pneumoniae (strain 342).